A 164-amino-acid chain; its full sequence is MTKIPDNIRQDAFKYVMENKPNELFELIAMNPGLINERSQGNQDTLFMRACRYLHKDIIEILLNEQANPTDINNHGNNAIMCLFYREDQHKKPKDINEHDEKAVAILKLFEEKNIPINCFTGQDADKDTPLIEAARAALPQSISFMLDYLEKKSLLRRSIITYK.

2 ANK repeats span residues 42–107 and 126–149; these read NQDT…VAIL and DKDT…MLDY.

This Rickettsia bellii (strain RML369-C) protein is Putative ankyrin repeat protein RBE_0585.